A 109-amino-acid chain; its full sequence is Nucleoid-associated protein MADE_1013280 (109 aa).

A disordered region spans residues 86–109 (TSKEKMGDVTGGMPLPPGFKMPGF). The segment covering 99–109 (PLPPGFKMPGF) has biased composition (pro residues).

It belongs to the YbaB/EbfC family. Homodimer.

It localises to the cytoplasm. Its subcellular location is the nucleoid. Functionally, binds to DNA and alters its conformation. May be involved in regulation of gene expression, nucleoid organization and DNA protection. The protein is Nucleoid-associated protein MADE_1013280 of Alteromonas mediterranea (strain DSM 17117 / CIP 110805 / LMG 28347 / Deep ecotype).